A 278-amino-acid chain; its full sequence is MSQEGSLGTKASSFEPQDIKVFHVKRSTRDLETLNKSLHRGDVYNTELIEKVFPRRTKKCVIHKDVIVKDGRVDCDLDIMDEGLDDINEEEFPLYHVGCIVVALMPHGKNLQGKVSVEVLDTRLVDGASRISRTLMDMSKPLSACADFPGYFISTSDLLNGYTLHLSITTTDLQFVDGVHPFSVQLMSIGRFCGEDMKTRYAITETSKMLHQNILNTEGDGELIPRGVQVQKVPDTLVMPEVFETIKKFGLKTNGTLRQEGRDKGDNRRVGVGESPTN.

The interval 256–278 is disordered; sequence TLRQEGRDKGDNRRVGVGESPTN. A compositionally biased stretch (basic and acidic residues) spans 259 to 271; it reads QEGRDKGDNRRVG.

This sequence belongs to the tobamoviruses movement protein family.

The chain is Movement protein from Vitis vinifera (Grape).